The following is a 132-amino-acid chain: Large ribosomal subunit protein bL12 (132 aa).

Residues 112–132 (KEAADKAKTQLEGAGGTINLK) form a disordered region.

It belongs to the bacterial ribosomal protein bL12 family. In terms of assembly, homodimer. Part of the ribosomal stalk of the 50S ribosomal subunit. Forms a multimeric L10(L12)X complex, where L10 forms an elongated spine to which 2 to 4 L12 dimers bind in a sequential fashion. Binds GTP-bound translation factors.

Its function is as follows. Forms part of the ribosomal stalk which helps the ribosome interact with GTP-bound translation factors. Is thus essential for accurate translation. The sequence is that of Large ribosomal subunit protein bL12 from Leifsonia xyli subsp. xyli (strain CTCB07).